Reading from the N-terminus, the 653-residue chain is Extracellular metalloproteinase (653 aa).

The signal sequence occupies residues 1–19; the sequence is MRSFLLASLASLSVISVYG. The propeptide occupies 20 to 244; the sequence is HPHARSTLTR…VHAVVDYSAD (225 aa). Residues Asn327, Asn336, and Asn412 are each glycosylated (N-linked (GlcNAc...) asparagine). Residue His429 participates in Zn(2+) binding. The active site involves Glu430. His433 provides a ligand contact to Zn(2+). Residues Asn636 and Asn637 are each glycosylated (N-linked (GlcNAc...) asparagine).

It belongs to the peptidase M36 family. Zn(2+) serves as cofactor.

It is found in the secreted. Functionally, secreted metalloproteinase that allows assimilation of proteinaceous substrates. The polypeptide is Extracellular metalloproteinase (MEP) (Pyrenophora tritici-repentis (strain Pt-1C-BFP) (Wheat tan spot fungus)).